The chain runs to 109 residues: Large ribosomal subunit protein uL22 (109 aa).

It belongs to the universal ribosomal protein uL22 family. As to quaternary structure, part of the 50S ribosomal subunit.

Its function is as follows. This protein binds specifically to 23S rRNA; its binding is stimulated by other ribosomal proteins, e.g. L4, L17, and L20. It is important during the early stages of 50S assembly. It makes multiple contacts with different domains of the 23S rRNA in the assembled 50S subunit and ribosome. The globular domain of the protein is located near the polypeptide exit tunnel on the outside of the subunit, while an extended beta-hairpin is found that lines the wall of the exit tunnel in the center of the 70S ribosome. This is Large ribosomal subunit protein uL22 from Methylobacillus flagellatus (strain ATCC 51484 / DSM 6875 / VKM B-1610 / KT).